Consider the following 72-residue polypeptide: Neuropeptide SIFamide (72 aa).

The signal sequence occupies residues 1–26; sequence MALRFTLTLLLVTILVAAILLGSSEA. A glycan (N-linked (GlcNAc...) asparagine) is linked at N34. A Phenylalanine amide modification is found at F38. The propeptide occupies 42–72; sequence NSLDYDSAKMSAVCEVAMEACPMWFPQNDSK.

Belongs to the FARP (FMRFamide related peptide) family. As to expression, strongly expressed in two pairs of neurons in the pars intercerebralis (at protein level).

It localises to the secreted. Functionally, ligand for the neuropeptide SIFamide receptor. Modulates sexual behavior by negatively regulating female receptivity to male courtship and by playing a role in male sex discrimination. Also involved in promoting sleep. The polypeptide is Neuropeptide SIFamide (Drosophila melanogaster (Fruit fly)).